The following is a 249-amino-acid chain: MKSCAILAALGCLAGSVLGHGQVQNFTINGQYNQGFILDYYYQKQNTGHFPNVAGWYAEDLDLGFISPDQYTTPDIVCHKNAAPGAISATAAAGSNIVFQWGPGVWPHPYGPIVTYVVECSGSCTTVNKNNLRWVKIQEAGINYNTQVWAQQDLINQGNKWTVKIPSSLRPGNYVFRHELLAAHGASSANGMQNYPQCVNIAVTGSGTKALPAGTPATQLYKPTDPGILFNPYTTITSYTIPGPALWQG.

Positions 1 to 19 (MKSCAILAALGCLAGSVLG) are cleaved as a signal peptide. Residue histidine 20 participates in Cu(2+) binding. Residue asparagine 25 is glycosylated (N-linked (GlcNAc...) asparagine). Disulfide bonds link cysteine 78–cysteine 198 and cysteine 120–cysteine 124. Position 108 (histidine 108) interacts with Cu(2+). O2 is bound by residues histidine 184 and glutamine 193. A Cu(2+)-binding site is contributed by tyrosine 195.

The protein belongs to the polysaccharide monooxygenase AA9 family. Monomer. Cu(2+) serves as cofactor.

The protein localises to the secreted. It catalyses the reaction [(1-&gt;4)-beta-D-glucosyl]n+m + reduced acceptor + O2 = 4-dehydro-beta-D-glucosyl-[(1-&gt;4)-beta-D-glucosyl]n-1 + [(1-&gt;4)-beta-D-glucosyl]m + acceptor + H2O.. In terms of biological role, lytic polysaccharide monooxygenase (LPMO) that depolymerizes crystalline and amorphous polysaccharides via the oxidation of scissile alpha- or beta-(1-4)-glycosidic bonds, yielding C1 or C4 oxidation products. Catalysis by LPMOs requires the reduction of the active-site copper from Cu(II) to Cu(I) by a reducing agent and H(2)O(2) or O(2) as a cosubstrate. This Hypocrea jecorina (strain QM6a) (Trichoderma reesei) protein is AA9 family lytic polysaccharide monooxygenase cel61B.